A 435-amino-acid chain; its full sequence is UDP-N-acetylmuramate--L-alanine ligase (435 aa).

ATP is bound at residue 108–114 (GAHGKST).

It belongs to the MurCDEF family.

Its subcellular location is the cytoplasm. It catalyses the reaction UDP-N-acetyl-alpha-D-muramate + L-alanine + ATP = UDP-N-acetyl-alpha-D-muramoyl-L-alanine + ADP + phosphate + H(+). It participates in cell wall biogenesis; peptidoglycan biosynthesis. Its function is as follows. Cell wall formation. The polypeptide is UDP-N-acetylmuramate--L-alanine ligase (Campylobacter curvus (strain 525.92)).